We begin with the raw amino-acid sequence, 169 residues long: Ureidoglycolate lyase (169 aa).

The protein belongs to the ureidoglycolate lyase family. In terms of assembly, homodimer. The cofactor is Ni(2+).

It carries out the reaction (S)-ureidoglycolate = urea + glyoxylate. Its pathway is nitrogen metabolism; (S)-allantoin degradation. In terms of biological role, catalyzes the catabolism of the allantoin degradation intermediate (S)-ureidoglycolate, generating urea and glyoxylate. Involved in the utilization of allantoin as nitrogen source. This chain is Ureidoglycolate lyase, found in Brucella melitensis biotype 2 (strain ATCC 23457).